A 119-amino-acid polypeptide reads, in one-letter code: MPRVKGGTVSRQRRKKVLKLAKGYFGSKHRLYKVANQQVMKSGNYAFRDRRQKKRDFRKLWITRINAAARMNGLSYSRLMHGLKLSGIEVNRKMLADLAVNDLSAFNQLADAAKAQLDK.

It belongs to the bacterial ribosomal protein bL20 family.

Its function is as follows. Binds directly to 23S ribosomal RNA and is necessary for the in vitro assembly process of the 50S ribosomal subunit. It is not involved in the protein synthesizing functions of that subunit. The protein is Large ribosomal subunit protein bL20 of Bacillus pumilus (strain SAFR-032).